The sequence spans 406 residues: 12S rRNA N(4)-cytidine methyltransferase METTL15 (406 aa).

A mitochondrion-targeting transit peptide spans 1 to 22; the sequence is MLRYPYFYRTYNRLFSHFVDSG. S-adenosyl-L-methionine is bound by residues 100–102, Asp-119, Phe-146, Asp-169, and Gln-176; that span reads GGH. Phosphoserine is present on Ser-358.

The protein belongs to the methyltransferase superfamily. RsmH family.

The protein resides in the mitochondrion matrix. It carries out the reaction cytidine(839) in 12S rRNA + S-adenosyl-L-methionine = N(4)-methylcytidine(839) in 12S rRNA + S-adenosyl-L-homocysteine + H(+). N4-methylcytidine (m4C) methyltransferase responsible for the methylation of position C839 in mitochondrial 12S rRNA. Involved in the stabilization of 12S rRNA folding, therefore facilitating the assembly of the mitochondrial small ribosomal subunits. The sequence is that of 12S rRNA N(4)-cytidine methyltransferase METTL15 from Mus musculus (Mouse).